The following is a 401-amino-acid chain: Nodulation protein E (401 aa).

A Ketosynthase family 3 (KS3) domain is found at aspartate 2–glutamine 400. Residues cysteine 162, histidine 294, and histidine 331 each act as for beta-ketoacyl synthase activity in the active site. A helical transmembrane segment spans residues histidine 329–isoleucine 348.

This sequence belongs to the thiolase-like superfamily. Beta-ketoacyl-ACP synthases family.

It localises to the cell inner membrane. In terms of biological role, proposed to synthesize NOD factor fatty acyl chain. Involved in the synthesis of a highly unsaturated fatty acid moiety, which forms part of a lipo-oligosaccharide that is responsible for host specificity. This Rhizobium leguminosarum bv. trifolii protein is Nodulation protein E (nodE).